Reading from the N-terminus, the 810-residue chain is Lon protease (810 aa).

In terms of domain architecture, Lon N-terminal spans 16–209; that stretch reads YPVPPLRDIV…RVYAFMEGEI (194 aa). Residue 361–368 participates in ATP binding; it reads GPPGVGKT. The Lon proteolytic domain occupies 598-779; sequence EDLVGVTTGL…DDVLKHALVR (182 aa). Catalysis depends on residues Ser685 and Lys728.

It belongs to the peptidase S16 family. In terms of assembly, homohexamer. Organized in a ring with a central cavity.

It localises to the cytoplasm. It catalyses the reaction Hydrolysis of proteins in presence of ATP.. Functionally, ATP-dependent serine protease that mediates the selective degradation of mutant and abnormal proteins as well as certain short-lived regulatory proteins. Required for cellular homeostasis and for survival from DNA damage and developmental changes induced by stress. Degrades polypeptides processively to yield small peptide fragments that are 5 to 10 amino acids long. Binds to DNA in a double-stranded, site-specific manner. Involved in iron uptake. The chain is Lon protease from Azospirillum brasilense.